Consider the following 283-residue polypeptide: uncharacterized protein (283 aa).

A signal peptide spans 1–25; it reads MNKKRLLFRTPLDALFLLFGTALSA. Cys26 carries N-palmitoyl cysteine lipidation. Residue Cys26 is the site of S-diacylglycerol cysteine attachment.

The protein belongs to the MG439/MG440 family.

The protein resides in the cell membrane. This is an uncharacterized protein from Mycoplasma pneumoniae (strain ATCC 29342 / M129 / Subtype 1) (Mycoplasmoides pneumoniae).